Reading from the N-terminus, the 203-residue chain is MNRSRRLALLCLGVPLLLQACASVAPSRSFDVDQDAASRQYTGRFSANYVRYGRDEGVQGSFRWEEQGRNVRLDLVSPLGQTLAVVTATPSGATLDLPNQPPRNAPEVDTLMEEALGFALPVAGMRDWLHGRATQGSPARATRDEQGRLATLAQNGWTVRYVAWQDTPAPGAAATQVPRRIDLARDAGSNPLSVRLVIDPQTP.

The signal sequence occupies residues 1 to 20 (MNRSRRLALLCLGVPLLLQA). Cys-21 carries N-palmitoyl cysteine lipidation. A lipid anchor (S-diacylglycerol cysteine) is attached at Cys-21.

This sequence belongs to the LolB family. Monomer.

It localises to the cell outer membrane. In terms of biological role, plays a critical role in the incorporation of lipoproteins in the outer membrane after they are released by the LolA protein. This chain is Outer-membrane lipoprotein LolB, found in Cupriavidus taiwanensis (strain DSM 17343 / BCRC 17206 / CCUG 44338 / CIP 107171 / LMG 19424 / R1) (Ralstonia taiwanensis (strain LMG 19424)).